The sequence spans 138 residues: uncharacterized protein (138 aa).

35–42 (DFIGSFYN) is an ATP binding site.

This is an uncharacterized protein from Acanthamoeba polyphaga mimivirus (APMV).